We begin with the raw amino-acid sequence, 355 residues long: Protein MGF 360-10L (355 aa).

The ANK repeat unit spans residues Asp57–Ile89.

This sequence belongs to the asfivirus MGF 360 family.

Functionally, plays a role in virus cell tropism, and may be required for efficient virus replication in macrophages. The polypeptide is Protein MGF 360-10L (African swine fever virus (isolate Tick/Malawi/Lil 20-1/1983) (ASFV)).